A 118-amino-acid chain; its full sequence is BolA-like protein 3 (118 aa).

It belongs to the BolA/IbaG family. Interacts with NFU1.

The protein resides in the mitochondrion matrix. Acts as a mitochondrial iron-sulfur (Fe-S) cluster assembly factor that facilitates [4Fe-4S] cluster insertion into a subset of mitochondrial proteins such as lipoyl synthase (LS) and succinate dehydrogenase (SDH). Required during the last step of iron-sulfur protein assembly when the iron-sulfur cluster is inserted into the target protein. Acts together with NFU1, later than BOL1 and GRX5 in the [4Fe-4S] cluster insertion process. Not required for [2Fe-2S] cluster insertion into mitochondrial proteins. The chain is BolA-like protein 3 from Saccharomyces cerevisiae (strain ATCC 204508 / S288c) (Baker's yeast).